Consider the following 1285-residue polypeptide: DNA polymerase II large subunit (1285 aa).

Residues 565–586 are disordered; that stretch reads TRIGGRMGRPGKSKPREMRPPP.

This sequence belongs to the archaeal DNA polymerase II family. Heterodimer of a large subunit and a small subunit. In terms of processing, this protein undergoes a protein self splicing that involves a post-translational excision of the intervening region (intein) followed by peptide ligation.

It carries out the reaction DNA(n) + a 2'-deoxyribonucleoside 5'-triphosphate = DNA(n+1) + diphosphate. It catalyses the reaction Exonucleolytic cleavage in the 3'- to 5'-direction to yield nucleoside 5'-phosphates.. Functionally, possesses two activities: a DNA synthesis (polymerase) and an exonucleolytic activity that degrades single-stranded DNA in the 3'- to 5'-direction. Has a template-primer preference which is characteristic of a replicative DNA polymerase. The polypeptide is DNA polymerase II large subunit (Methanoculleus marisnigri (strain ATCC 35101 / DSM 1498 / JR1)).